The sequence spans 473 residues: Glycine receptor subunit beta-type 4 (473 aa).

The signal sequence occupies residues 1–19; it reads MHSLFLKILIYSLMQCVLG. Topologically, residues 20-249 are extracellular; sequence QAEFWDYDEN…EFHVDREITH (230 aa). Asn-29, Asn-105, and Asn-151 each carry an N-linked (GlcNAc...) asparagine glycan. A disulfide bridge links Cys-166 with Cys-180. The chain crosses the membrane as a helical span at residues 250–271; the sequence is HIIQSYIPTSLIVIISWFSFWL. The Cytoplasmic portion of the chain corresponds to 272-276; the sequence is DVEAV. Residues 277–297 form a helical membrane-spanning segment; it reads PGRVSLSITTLLTLATQSSAA. The Extracellular segment spans residues 298–308; it reads RMALPQASDVK. A helical membrane pass occupies residues 309-329; sequence AIDVWMGTCMAFVFSAMIEFT. The Cytoplasmic segment spans residues 330-439; that stretch reads VVNYCVRRKV…NRKNAQKIDR (110 aa). The helical transmembrane segment at 440–460 threads the bilayer; the sequence is YSRALFPLAFIIFNIFYWIYY. The Extracellular portion of the chain corresponds to 461 to 473; the sequence is LKYAGSNSPELLL.

Belongs to the ligand-gated ion channel (TC 1.A.9) family. Glycine receptor (TC 1.A.9.3) subfamily. As to quaternary structure, pentamer.

Its subcellular location is the postsynaptic cell membrane. It localises to the synapse. The protein resides in the cell membrane. In terms of biological role, glycine receptors are ligand-gated chloride channels. Channel opening is triggered by extracellular glycine. Contributes to the generation of inhibitory postsynaptic currents. In Caenorhabditis elegans, this protein is Glycine receptor subunit beta-type 4.